Reading from the N-terminus, the 493-residue chain is Glycerol kinase (493 aa).

Threonine 11 contacts ADP. Residues threonine 11, threonine 12, and serine 13 each contribute to the ATP site. Threonine 11 lines the sn-glycerol 3-phosphate pocket. ADP is bound at residue arginine 15. Sn-glycerol 3-phosphate is bound by residues arginine 80, glutamate 81, tyrosine 132, and aspartate 241. Positions 80, 81, 132, 241, and 242 each coordinate glycerol. Residues threonine 263 and glycine 306 each coordinate ADP. ATP is bound by residues threonine 263, glycine 306, glutamine 310, and glycine 408. Glycine 408 is a binding site for ADP.

It belongs to the FGGY kinase family.

It catalyses the reaction glycerol + ATP = sn-glycerol 3-phosphate + ADP + H(+). The protein operates within polyol metabolism; glycerol degradation via glycerol kinase pathway; sn-glycerol 3-phosphate from glycerol: step 1/1. With respect to regulation, inhibited by fructose 1,6-bisphosphate (FBP). In terms of biological role, key enzyme in the regulation of glycerol uptake and metabolism. Catalyzes the phosphorylation of glycerol to yield sn-glycerol 3-phosphate. In Cereibacter sphaeroides (strain ATCC 17029 / ATH 2.4.9) (Rhodobacter sphaeroides), this protein is Glycerol kinase.